The primary structure comprises 186 residues: Protein GrpE (186 aa).

Residues M1 to D22 show a composition bias toward basic and acidic residues. The segment at M1–E35 is disordered. Over residues D23–E34 the composition is skewed to acidic residues.

The protein belongs to the GrpE family. As to quaternary structure, homodimer.

The protein localises to the cytoplasm. Participates actively in the response to hyperosmotic and heat shock by preventing the aggregation of stress-denatured proteins, in association with DnaK and GrpE. It is the nucleotide exchange factor for DnaK and may function as a thermosensor. Unfolded proteins bind initially to DnaJ; upon interaction with the DnaJ-bound protein, DnaK hydrolyzes its bound ATP, resulting in the formation of a stable complex. GrpE releases ADP from DnaK; ATP binding to DnaK triggers the release of the substrate protein, thus completing the reaction cycle. Several rounds of ATP-dependent interactions between DnaJ, DnaK and GrpE are required for fully efficient folding. This chain is Protein GrpE, found in Wolbachia pipientis subsp. Culex pipiens (strain wPip).